Reading from the N-terminus, the 361-residue chain is Cyclin-Y-like protein 2 (361 aa).

The 83-residue stretch at 204-286 (MRLTAEFAIV…QFLKLINYNN (83 aa)) folds into the Cyclin N-terminal domain.

Belongs to the cyclin family. Cyclin Y subfamily.

In Homo sapiens (Human), this protein is Cyclin-Y-like protein 2 (CCNYL2).